We begin with the raw amino-acid sequence, 177 residues long: RNA pyrophosphohydrolase (177 aa).

In terms of domain architecture, Nudix hydrolase spans 6–149; sequence GYRPNVGIVI…KRDVYRRVMK (144 aa). The Nudix box motif lies at 38-59; sequence GGINPGESAEQAMYRELFEEVG.

The protein belongs to the Nudix hydrolase family. RppH subfamily. Requires a divalent metal cation as cofactor.

Its function is as follows. Accelerates the degradation of transcripts by removing pyrophosphate from the 5'-end of triphosphorylated RNA, leading to a more labile monophosphorylated state that can stimulate subsequent ribonuclease cleavage. The chain is RNA pyrophosphohydrolase from Pectobacterium carotovorum subsp. carotovorum (strain PC1).